The following is a 342-amino-acid chain: Protein FinQ (342 aa).

Positions 208–227 (RDREFNLLNAQISMVLYICS) form a DNA-binding region, H-T-H motif.

Transcriptional inhibitor of the F plasmid transfer genes. FinQ may regulate a gene or genes encoded on the IncI plasmids, and coincidentally may inhibit F transfer when coresident. This is Protein FinQ (finQ) from Escherichia coli.